The following is a 441-amino-acid chain: MAKQPGYQARSTNSGKGELKSRLLFVLGALIVYRIGSFIPVPGIDAAVLAQLVEQQKGTIIDMFNMFSGGALSRASILALGIMPYISASIVIQLLATVSPALAELKKEGAAGQRKISKYTRYATVVFATIQAVAISTGLPNMLSGLVPNVGFSFYFTSVVSLVTGTMFLMWLGEQITERGIGNGISILVFGGIVAGLPSAILQTIEQARQGQMHPLVLLLIAAIVFAVTYFVVFVERGQRRIRVEYAKRQQGRQILGGHSTHLPLKVNMANVMPAIFASSIILFPATLTQWFGQNDKFEWLNNLSMLLNPGQPLYLLVYAVAIIFFSFFYTAMQYNPRDTADNLKKSGAFIPGIRPGEQTSRYIDKVMTRLTLIGGLYVTFVCLVPYIMTSAWDVKFYFGGTSLLIVVVVIMDFIVQVQSHLMSSQYESALKKANLKGFGQ.

10 helical membrane passes run 24-44 (LFVL…VPGI), 77-97 (ILAL…LLAT), 123-143 (ATVV…PNML), 152-172 (FSFY…LMWL), 181-201 (IGNG…PSAI), 215-235 (PLVL…VVFV), 272-292 (VMPA…TQWF), 313-333 (PLYL…YTAM), 373-393 (LIGG…TSAW), and 397-417 (FYFG…FIVQ).

Belongs to the SecY/SEC61-alpha family. In terms of assembly, component of the Sec protein translocase complex. Heterotrimer consisting of SecY, SecE and SecG subunits. The heterotrimers can form oligomers, although 1 heterotrimer is thought to be able to translocate proteins. Interacts with the ribosome. Interacts with SecDF, and other proteins may be involved. Interacts with SecA.

The protein localises to the cell inner membrane. Its function is as follows. The central subunit of the protein translocation channel SecYEG. Consists of two halves formed by TMs 1-5 and 6-10. These two domains form a lateral gate at the front which open onto the bilayer between TMs 2 and 7, and are clamped together by SecE at the back. The channel is closed by both a pore ring composed of hydrophobic SecY resides and a short helix (helix 2A) on the extracellular side of the membrane which forms a plug. The plug probably moves laterally to allow the channel to open. The ring and the pore may move independently. The chain is Protein translocase subunit SecY from Haemophilus influenzae (strain ATCC 51907 / DSM 11121 / KW20 / Rd).